The chain runs to 108 residues: uncharacterized protein (108 aa).

3 consecutive transmembrane segments (helical) span residues isoleucine 4–methionine 24, glycine 46–glycine 66, and isoleucine 81–leucine 101.

It localises to the cell membrane. This is an uncharacterized protein from Escherichia coli O157:H7.